Reading from the N-terminus, the 161-residue chain is Probable K(+)/H(+) antiporter subunit E (161 aa).

Transmembrane regions (helical) follow at residues tryptophan 4–leucine 21 and glycine 28–alanine 50.

It belongs to the CPA3 antiporters (TC 2.A.63) subunit E family. May form a hetero-oligomeric complex that consists of six subunits: PhaAB, PhaC, PhaD, PhaE, PhaF and PhaG.

The protein resides in the cell membrane. In terms of biological role, part of a K(+) efflux system which is required for the adaptation of R.meliloti to alkaline pH as well as for the infection process during symbiotic nodule development. In Rhizobium meliloti (strain 1021) (Ensifer meliloti), this protein is Probable K(+)/H(+) antiporter subunit E (phaE).